The chain runs to 369 residues: Probable dual-specificity RNA methyltransferase RlmN (369 aa).

Residue glutamate 106 is the Proton acceptor of the active site. Residues glutamate 118 to aspartate 354 enclose the Radical SAM core domain. A disulfide bridge connects residues cysteine 125 and cysteine 359. [4Fe-4S] cluster-binding residues include cysteine 132, cysteine 136, and cysteine 139. Residues glycine 183–glutamate 184, serine 215, serine 238–histidine 240, and asparagine 316 each bind S-adenosyl-L-methionine. Cysteine 359 functions as the S-methylcysteine intermediate in the catalytic mechanism.

The protein belongs to the radical SAM superfamily. RlmN family. [4Fe-4S] cluster is required as a cofactor.

It is found in the cytoplasm. The catalysed reaction is adenosine(2503) in 23S rRNA + 2 reduced [2Fe-2S]-[ferredoxin] + 2 S-adenosyl-L-methionine = 2-methyladenosine(2503) in 23S rRNA + 5'-deoxyadenosine + L-methionine + 2 oxidized [2Fe-2S]-[ferredoxin] + S-adenosyl-L-homocysteine. The enzyme catalyses adenosine(37) in tRNA + 2 reduced [2Fe-2S]-[ferredoxin] + 2 S-adenosyl-L-methionine = 2-methyladenosine(37) in tRNA + 5'-deoxyadenosine + L-methionine + 2 oxidized [2Fe-2S]-[ferredoxin] + S-adenosyl-L-homocysteine. Specifically methylates position 2 of adenine 2503 in 23S rRNA and position 2 of adenine 37 in tRNAs. The polypeptide is Probable dual-specificity RNA methyltransferase RlmN (Salinibacter ruber (strain DSM 13855 / M31)).